Here is a 220-residue protein sequence, read N- to C-terminus: Adenylate kinase (220 aa).

10–15 (GAGKGT) is a binding site for ATP. Residues 30–59 (STGDMLRAAVKAGTPLGLKAKEVMDGGNLV) form an NMP region. AMP is bound by residues Thr31, Arg36, 57–59 (NLV), 85–88 (GFPR), and Gln92. An LID region spans residues 122 to 159 (GRRVHPASGRTYHIRFNPPQTAGMDDETGEPLVQRADD). Residues Arg123 and 132-133 (TY) each bind ATP. AMP is bound by residues Arg156 and Arg167. Position 205 (Gly205) interacts with ATP.

Belongs to the adenylate kinase family. Monomer.

It localises to the cytoplasm. It catalyses the reaction AMP + ATP = 2 ADP. Its pathway is purine metabolism; AMP biosynthesis via salvage pathway; AMP from ADP: step 1/1. Its function is as follows. Catalyzes the reversible transfer of the terminal phosphate group between ATP and AMP. Plays an important role in cellular energy homeostasis and in adenine nucleotide metabolism. This Chlorobium luteolum (strain DSM 273 / BCRC 81028 / 2530) (Pelodictyon luteolum) protein is Adenylate kinase.